Reading from the N-terminus, the 467-residue chain is Programmed cell death protein 4 (467 aa).

2 disordered regions span residues Ala-21–Trp-43 and Lys-57–Thr-124. The Nuclear localization signal signature appears at Lys-57 to Arg-63. Residues Lys-112 to Gly-123 show a composition bias toward gly residues. MI domains are found at residues Ala-161–Gly-282 and His-324–Ser-447. The Nuclear localization signal motif lies at Pro-446–Arg-452.

This sequence belongs to the PDCD4 family. In terms of assembly, interacts with EIF4A. Expressed in a broad spectrum of hematopoietic organs, such as thymus and bursa. Lower levels of expression detected in the kidney.

It is found in the nucleus. The protein resides in the cytoplasm. Inhibits translation initiation and cap-dependent translation. May excert its function by hindering the interaction between EIF4A and EIF4G. Inhibits the helicase activity of EIF4A. Binds RNA. Does not seem to be involved in apoptosis. The chain is Programmed cell death protein 4 (PDCD4) from Gallus gallus (Chicken).